A 773-amino-acid chain; its full sequence is ATP-dependent permease MDL2, mitochondrial (773 aa).

The N-terminal 90 residues, 1-90 (MLNGRLPLLR…SPISKGSARS (90 aa)), are a transit peptide targeting the mitochondrion. The span at 73–84 (PETSLPSASPIS) shows a compositional bias: polar residues. Positions 73 to 95 (PETSLPSASPISKGSARSAHAKE) are disordered. The ABC transmembrane type-1 domain occupies 119–413 (LLTAILLLTI…LSTFYSEIMQ (295 aa)). Transmembrane regions (helical) follow at residues 123–143 (ILLLTISCSIGMSIPKVIGIV), 170–192 (FLSFFTVALLIGCAANFGRFILL), and 257–277 (VVGVGMMCSLSPQLSILLLFF). Position 481-488 (481-488 (GPSGRGKS)) interacts with ATP. An ABC transporter domain is found at 493–733 (LLLRYYNPTT…DDNDNNHDND (241 aa)). Composition is skewed to basic and acidic residues over residues 706-733 (KEDLNESKEHDDQKKDDNDDNDNNHDND) and 740-762 (ETKDNNSDDIEKSVEHLLKDAAK). Positions 706-773 (KEDLNESKEH…ANPIKITPQP (68 aa)) are disordered.

It belongs to the ABC transporter superfamily. ABCB family. Mitochondrial peptide exporter (TC 3.A.1.212) subfamily.

It localises to the mitochondrion inner membrane. The chain is ATP-dependent permease MDL2, mitochondrial (MDL2) from Saccharomyces cerevisiae (strain ATCC 204508 / S288c) (Baker's yeast).